The primary structure comprises 501 residues: Probable cytosol aminopeptidase (501 aa).

2 residues coordinate Mn(2+): Lys270 and Asp275. The active site involves Lys282. Positions 293, 352, and 354 each coordinate Mn(2+). Arg356 is a catalytic residue.

The protein belongs to the peptidase M17 family. Mn(2+) is required as a cofactor.

The protein localises to the cytoplasm. The enzyme catalyses Release of an N-terminal amino acid, Xaa-|-Yaa-, in which Xaa is preferably Leu, but may be other amino acids including Pro although not Arg or Lys, and Yaa may be Pro. Amino acid amides and methyl esters are also readily hydrolyzed, but rates on arylamides are exceedingly low.. The catalysed reaction is Release of an N-terminal amino acid, preferentially leucine, but not glutamic or aspartic acids.. Presumably involved in the processing and regular turnover of intracellular proteins. Catalyzes the removal of unsubstituted N-terminal amino acids from various peptides. In Wigglesworthia glossinidia brevipalpis, this protein is Probable cytosol aminopeptidase.